Consider the following 244-residue polypeptide: 7-cyano-7-deazaguanine synthase (244 aa).

ATP is bound at residue 14–24; that stretch reads FSGGQDSATCV. Cys202, Cys217, Cys220, and Cys223 together coordinate Zn(2+).

Belongs to the QueC family. Zn(2+) is required as a cofactor.

The catalysed reaction is 7-carboxy-7-deazaguanine + NH4(+) + ATP = 7-cyano-7-deazaguanine + ADP + phosphate + H2O + H(+). It participates in purine metabolism; 7-cyano-7-deazaguanine biosynthesis. Functionally, catalyzes the ATP-dependent conversion of 7-carboxy-7-deazaguanine (CDG) to 7-cyano-7-deazaguanine (preQ(0)). The sequence is that of 7-cyano-7-deazaguanine synthase from Burkholderia lata (strain ATCC 17760 / DSM 23089 / LMG 22485 / NCIMB 9086 / R18194 / 383).